We begin with the raw amino-acid sequence, 254 residues long: D-aminoacyl-tRNA deacylase (254 aa).

A disordered region spans residues 61–85; that stretch reads KPTLTVHTPGNLTEDNSRGGNSEEI. Polar residues predominate over residues 65-84; the sequence is TVHTPGNLTEDNSRGGNSEE.

Belongs to the DtdA deacylase family. Monomer. It depends on Zn(2+) as a cofactor.

It catalyses the reaction a D-aminoacyl-tRNA + H2O = a tRNA + a D-alpha-amino acid + H(+). The catalysed reaction is glycyl-tRNA(Ala) + H2O = tRNA(Ala) + glycine + H(+). D-aminoacyl-tRNA deacylase with broad substrate specificity. By recycling D-aminoacyl-tRNA to D-amino acids and free tRNA molecules, this enzyme counteracts the toxicity associated with the formation of D-aminoacyl-tRNA entities in vivo. In Methanococcus maripaludis (strain C5 / ATCC BAA-1333), this protein is D-aminoacyl-tRNA deacylase.